The sequence spans 343 residues: Anthranilate phosphoribosyltransferase (343 aa).

Residues Gly78, 81–82 (GD), Thr86, 88–91 (NIST), 106–114 (KHGNRSVSS), and Ser118 contribute to the 5-phospho-alpha-D-ribose 1-diphosphate site. Residue Gly78 participates in anthranilate binding. Ser90 is a Mg(2+) binding site. Anthranilate is bound at residue Asn109. Position 164 (Arg164) interacts with anthranilate. 2 residues coordinate Mg(2+): Asp223 and Glu224.

This sequence belongs to the anthranilate phosphoribosyltransferase family. Homodimer. Mg(2+) serves as cofactor.

It catalyses the reaction N-(5-phospho-beta-D-ribosyl)anthranilate + diphosphate = 5-phospho-alpha-D-ribose 1-diphosphate + anthranilate. The protein operates within amino-acid biosynthesis; L-tryptophan biosynthesis; L-tryptophan from chorismate: step 2/5. In terms of biological role, catalyzes the transfer of the phosphoribosyl group of 5-phosphorylribose-1-pyrophosphate (PRPP) to anthranilate to yield N-(5'-phosphoribosyl)-anthranilate (PRA). In Chlamydia caviae (strain ATCC VR-813 / DSM 19441 / 03DC25 / GPIC) (Chlamydophila caviae), this protein is Anthranilate phosphoribosyltransferase.